Reading from the N-terminus, the 336-residue chain is Protein-glutamate methylesterase/protein-glutamine glutaminase 1 (336 aa).

In terms of domain architecture, Response regulatory spans 2-119 (KIAIVNDMPL…GNPQEAAAPL (118 aa)). Position 53 is a 4-aspartylphosphate (D53). A CheB-type methylesterase domain is found at 147-336 (TASRQRLVAI…APRLLEIFPK (190 aa)). Active-site residues include S159, H186, and D279.

Belongs to the CheB family. Phosphorylated by CheA. Phosphorylation of the N-terminal regulatory domain activates the methylesterase activity.

Its subcellular location is the cytoplasm. It carries out the reaction [protein]-L-glutamate 5-O-methyl ester + H2O = L-glutamyl-[protein] + methanol + H(+). It catalyses the reaction L-glutaminyl-[protein] + H2O = L-glutamyl-[protein] + NH4(+). In terms of biological role, involved in chemotaxis. Part of a chemotaxis signal transduction system that modulates chemotaxis in response to various stimuli. Catalyzes the demethylation of specific methylglutamate residues introduced into the chemoreceptors (methyl-accepting chemotaxis proteins or MCP) by CheR. Also mediates the irreversible deamidation of specific glutamine residues to glutamic acid. This chain is Protein-glutamate methylesterase/protein-glutamine glutaminase 1, found in Pseudomonas fluorescens (strain Pf0-1).